Here is a 453-residue protein sequence, read N- to C-terminus: Bis(5'-adenosyl)-triphosphatase ENPP4 (453 aa).

A signal peptide spans 1-15; the sequence is MKLLVILLFSGLITG. Over 16-407 the chain is Extracellular; the sequence is FRSDSSSSLP…DQWCINLPEA (392 aa). Zn(2+) is bound by residues Asp34 and Thr70. Thr70 acts as the AMP-threonine intermediate in catalysis. The substrate site is built by Asn91 and Tyr154. Residues Asn155 and Asn166 are each glycosylated (N-linked (GlcNAc...) asparagine). Positions 189, 193, 237, and 238 each coordinate Zn(2+). A substrate-binding site is contributed by Asp189. A disulfide bridge links Cys254 with Cys287. Asn276 is a glycosylation site (N-linked (GlcNAc...) asparagine). His336 contacts Zn(2+). N-linked (GlcNAc...) asparagine glycosylation occurs at Asn386. Cysteines 394 and 401 form a disulfide. The helical transmembrane segment at 408–428 threads the bilayer; it reads IAIVIGSLLVLTMLTCLIIIM. At 429–453 the chain is on the cytoplasmic side; sequence QNRLSVPRPFSRLQLQEDDDDPLIG.

Belongs to the nucleotide pyrophosphatase/phosphodiesterase family. Requires Zn(2+) as cofactor. As to expression, expressed on the surface of vascular endothelia.

It is found in the cell membrane. The catalysed reaction is P(1),P(3)-bis(5'-adenosyl) triphosphate + H2O = AMP + ADP + 2 H(+). Hydrolyzes extracellular Ap3A into AMP and ADP, and Ap4A into AMP and ATP. Ap3A and Ap4A are diadenosine polyphosphates thought to induce proliferation of vascular smooth muscle cells. Acts as a procoagulant, mediating platelet aggregation at the site of nascent thrombus via release of ADP from Ap3A and activation of ADP receptors. The protein is Bis(5'-adenosyl)-triphosphatase ENPP4 (ENPP4) of Homo sapiens (Human).